A 108-amino-acid chain; its full sequence is Large ribosomal subunit protein uL22 (108 aa).

This sequence belongs to the universal ribosomal protein uL22 family. Part of the 50S ribosomal subunit.

In terms of biological role, this protein binds specifically to 23S rRNA; its binding is stimulated by other ribosomal proteins, e.g. L4, L17, and L20. It is important during the early stages of 50S assembly. It makes multiple contacts with different domains of the 23S rRNA in the assembled 50S subunit and ribosome. Functionally, the globular domain of the protein is located near the polypeptide exit tunnel on the outside of the subunit, while an extended beta-hairpin is found that lines the wall of the exit tunnel in the center of the 70S ribosome. The chain is Large ribosomal subunit protein uL22 from Desulfatibacillum aliphaticivorans.